The chain runs to 205 residues: Histidine biosynthesis bifunctional protein HisIE (205 aa).

The interval 1-116 (MLKLKFNEEG…KVEKPLPFEV (116 aa)) is phosphoribosyl-AMP cyclohydrolase. A phosphoribosyl-ATP pyrophosphohydrolase region spans residues 117–205 (LPRLQDVIRE…VMEELIRRFK (89 aa)).

It in the N-terminal section; belongs to the PRA-CH family. In the C-terminal section; belongs to the PRA-PH family.

The protein resides in the cytoplasm. It catalyses the reaction 1-(5-phospho-beta-D-ribosyl)-ATP + H2O = 1-(5-phospho-beta-D-ribosyl)-5'-AMP + diphosphate + H(+). The catalysed reaction is 1-(5-phospho-beta-D-ribosyl)-5'-AMP + H2O = 1-(5-phospho-beta-D-ribosyl)-5-[(5-phospho-beta-D-ribosylamino)methylideneamino]imidazole-4-carboxamide. The protein operates within amino-acid biosynthesis; L-histidine biosynthesis; L-histidine from 5-phospho-alpha-D-ribose 1-diphosphate: step 2/9. It participates in amino-acid biosynthesis; L-histidine biosynthesis; L-histidine from 5-phospho-alpha-D-ribose 1-diphosphate: step 3/9. This chain is Histidine biosynthesis bifunctional protein HisIE (hisI), found in Aquifex aeolicus (strain VF5).